The primary structure comprises 612 residues: 2-isopropylmalate synthase B (612 aa).

The region spanning 71 to 344 (VRIFDTTLRD…YTGINTQHIL (274 aa)) is the Pyruvate carboxyltransferase domain. The a divalent metal cation site is built by aspartate 80, histidine 277, and asparagine 313.

The protein belongs to the alpha-IPM synthase/homocitrate synthase family. LeuA type 1 subfamily. Homodimer. Requires a divalent metal cation as cofactor.

It catalyses the reaction 3-methyl-2-oxobutanoate + acetyl-CoA + H2O = (2S)-2-isopropylmalate + CoA + H(+). The protein operates within amino-acid biosynthesis; L-leucine biosynthesis; L-leucine from 3-methyl-2-oxobutanoate: step 1/4. Catalyzes the condensation of the acetyl group of acetyl-CoA with 3-methyl-2-oxobutanoate (2-oxoisovalerate) to form 3-carboxy-3-hydroxy-4-methylpentanoate (2-isopropylmalate). The polypeptide is 2-isopropylmalate synthase B (IPMSB) (Solanum pennellii (Tomato)).